A 219-amino-acid chain; its full sequence is MSINKNKNLSSIKNKKNQDVNSRQELIKVYAPDIFDSKLIGKTLIKKRNPADENSSVDNKIYQVSLADILGKEEFSSINFNFKSLKIFNNECFTKFHGLTLTRDKICSLIKKWHTLIEVEVNFKTKDGYFLKLFLIAQSKKPKNMKSKTVYINSSQKRALRRRITDIIIKEGINMDIKDFIHRIYSLKIYEKIEINCSKIFPIHQVNIRKIKVVENSTL.

Belongs to the eukaryotic ribosomal protein eS1 family. Component of the small ribosomal subunit. Mature ribosomes consist of a small (40S) and a large (60S) subunit. The 40S subunit contains about 33 different proteins and 1 molecule of RNA (18S). The 60S subunit contains about 49 different proteins and 3 molecules of RNA (25S, 5.8S and 5S).

It is found in the cytoplasm. This is Small ribosomal subunit protein eS1 from Guillardia theta (Cryptophyte).